Reading from the N-terminus, the 481-residue chain is Fibrinogen beta chain (481 aa).

The signal sequence occupies residues 1–19 (MRHLWLLLLLCVFSVQTQA). The interval 22–81 (DDYDEPTDSLDARGHRPVDRRKEEPPSLRPAPPPISGGGYRARPAKATANQKKVERRPPD) is disordered. Over residues 31–47 (LDARGHRPVDRRKEEPP) the composition is skewed to basic and acidic residues. The beta-chain polymerization, binding distal domain of another fibrin stretch occupies residues 35–37 (GHR). Positions 149–213 (QAQVKENENV…SDISAQMEYC (65 aa)) form a coiled coil. Disulfide bonds link Cys221-Cys306 and Cys231-Cys260. The 257-residue stretch at 222-478 (NIPVVSGKEC…RMSMKIRPFF (257 aa)) folds into the Fibrinogen C-terminal domain. Asn384 carries N-linked (GlcNAc...) asparagine glycosylation. A disulfide bridge links Cys414 with Cys427.

Heterohexamer; disulfide linked. Contains 2 sets of 3 non-identical chains (alpha, beta and gamma). The 2 heterotrimers are in head to head conformation with the N-termini in a small central domain. Post-translationally, conversion of fibrinogen to fibrin is triggered by thrombin, which cleaves fibrinopeptides A and B from alpha and beta chains, and thus exposes the N-terminal polymerization sites responsible for the formation of the soft clot.

Its subcellular location is the secreted. In terms of biological role, cleaved by the protease thrombin to yield monomers which, together with fibrinogen alpha (FGA) and fibrinogen gamma (FGG), polymerize to form an insoluble fibrin matrix. Fibrin has a major function in hemostasis as one of the primary components of blood clots. In addition, functions during the early stages of wound repair to stabilize the lesion and guide cell migration during re-epithelialization. Was originally thought to be essential for platelet aggregation, based on in vitro studies using anticoagulated blood. However, subsequent studies have shown that it is not absolutely required for thrombus formation in vivo. Enhances expression of SELP in activated platelets via an ITGB3-dependent pathway. Maternal fibrinogen is essential for successful pregnancy. Fibrin deposition is also associated with infection, where it protects against IFNG-mediated hemorrhage. May also facilitate the immune response via both innate and T-cell mediated pathways. The chain is Fibrinogen beta chain (Fgb) from Mus musculus (Mouse).